The chain runs to 535 residues: T-complex protein 1 subunit epsilon (535 aa).

The protein belongs to the TCP-1 chaperonin family. As to quaternary structure, heterooligomeric complex of about 850 to 900 kDa that forms two stacked rings, 12 to 16 nm in diameter.

It localises to the cytoplasm. Molecular chaperone; assists the folding of proteins upon ATP hydrolysis. Known to play a role, in vitro, in the folding of actin and tubulin. This chain is T-complex protein 1 subunit epsilon, found in Arabidopsis thaliana (Mouse-ear cress).